A 190-amino-acid chain; its full sequence is NADH-ubiquinone oxidoreductase 75 kDa subunit, mitochondrial (190 aa).

It belongs to the complex I 75 kDa subunit family. Core subunit of respiratory chain NADH dehydrogenase (Complex I) which is composed of 45 different subunits. This is the largest subunit of complex I and it is a component of the iron-sulfur (IP) fragment of the enzyme. Complex I associates with ubiquinol-cytochrome reductase complex (Complex III) to form supercomplexes. Interacts with MDM2 and AKAP1. The cofactor is [2Fe-2S] cluster. Requires [4Fe-4S] cluster as cofactor.

It is found in the mitochondrion inner membrane. It carries out the reaction a ubiquinone + NADH + 5 H(+)(in) = a ubiquinol + NAD(+) + 4 H(+)(out). Functionally, core subunit of the mitochondrial membrane respiratory chain NADH dehydrogenase (Complex I) which catalyzes electron transfer from NADH through the respiratory chain, using ubiquinone as an electron acceptor. Essential for catalysing the entry and efficient transfer of electrons within complex I. Plays a key role in the assembly and stability of complex I and participates in the association of complex I with ubiquinol-cytochrome reductase complex (Complex III) to form supercomplexes. The polypeptide is NADH-ubiquinone oxidoreductase 75 kDa subunit, mitochondrial (Mesocricetus auratus (Golden hamster)).